The primary structure comprises 194 residues: WASH complex subunit 3 (194 aa).

Residue M1 is modified to N-acetylmethionine. Positions 46-74 (AVCEEKLADLSLRIQQIETTLNILDAKLS) form a coiled coil. 2 disordered regions span residues 94-126 (VTNGSHSETTSEQTQQNSTQDSGAQESEAPSEN) and 158-194 (SEGLDPELLEKPDAPVPNGESERAVEESSDSDSSFSD). Residues 98–113 (SHSETTSEQTQQNSTQ) are compositionally biased toward low complexity. Positions 114–126 (DSGAQESEAPSEN) are enriched in polar residues.

The protein belongs to the CCDC53 family. Component of the WASH core complex also described as WASH regulatory complex (SHRC) composed of WASHC1, WASHC2, WASHC3, WASHC4 and WASHC5. The WASH core complex associates via WASHC2 with the F-actin-capping protein dimer (formed by CAPZA1, CAPZA2 or CAPZA3 and CAPZB) in a transient or substoichiometric manner which was initially described as WASH complex.

It localises to the early endosome. Its function is as follows. Acts as a component of the WASH core complex that functions as a nucleation-promoting factor (NPF) at the surface of endosomes, where it recruits and activates the Arp2/3 complex to induce actin polymerization, playing a key role in the fission of tubules that serve as transport intermediates during endosome sortingg. In Mus musculus (Mouse), this protein is WASH complex subunit 3.